A 156-amino-acid polypeptide reads, in one-letter code: Rhombotin-1 (156 aa).

2 consecutive LIM zinc-binding domains span residues 22-84 (KGCA…LFGT) and 86-148 (GNCA…GHLN).

In terms of tissue distribution, expressed in the brain and not in the thymus.

The protein localises to the nucleus. In terms of biological role, may be involved in gene regulation within neural lineage cells potentially by direct DNA binding or by binding to other transcription factors. This Mus musculus (Mouse) protein is Rhombotin-1 (Lmo1).